The primary structure comprises 486 residues: Pentatricopeptide repeat-containing protein At3g06430, chloroplastic (486 aa).

The N-terminal 36 residues, 1–36, are a transit peptide targeting the chloroplast; the sequence is MASMSLSFSSSLCSSRIPEGKRRFRHRDVGIVRCVL. 10 PPR repeats span residues 123-157, 158-188, 194-228, 229-264, 265-299, 300-334, 335-369, 370-404, 405-439, and 440-470; these read KEGT…GLEP, TVEL…MKSF, DVFT…LITP, NTVT…ACKP, DVWT…GIEP, ETRT…EFPW, TTST…GMKA, DTKT…EIPE, NTAF…QCVC, and DSRT…RQKL.

Belongs to the PPR family. P subfamily.

It localises to the plastid. The protein localises to the chloroplast. This chain is Pentatricopeptide repeat-containing protein At3g06430, chloroplastic (EMB2750), found in Arabidopsis thaliana (Mouse-ear cress).